The sequence spans 197 residues: Syndecan-4 (197 aa).

The N-terminal stretch at 1–19 (MPLPRAAFLLGLLLAAAAA) is a signal peptide. The Extracellular segment spans residues 20-147 (ESVRETETMD…SIFERTEVLT (128 aa)). O-linked (Xyl...) (glycosaminoglycan) serine glycans are attached at residues S38, S65, and S67. 2 N-linked (GlcNAc...) asparagine glycosylation sites follow: N124 and N136. Residues 148-168 (ALIAGGAVGLLFAVFLILLLV) traverse the membrane as a helical segment. The Cytoplasmic segment spans residues 169–197 (YRMKKKDEGSYDLGKKPIYKKAPTNEFYA).

This sequence belongs to the syndecan proteoglycan family. As to quaternary structure, interacts with SDOS. Post-translationally, O-glycosylated; contains both chondroitin sulfate and heparan sulfate. Ser-38, Ser-65 and Ser-67 can all be modified by either chondroitin sulfate or heparan sulfate, and the protein exists in forms that contain only chondroitin sulfate, only heparan sulfate and both chondroitin sulfate and heparan sulfate.

It is found in the membrane. Its function is as follows. Cell surface proteoglycan which regulates exosome biogenesis in concert with SDCBP and PDCD6IP. This Gallus gallus (Chicken) protein is Syndecan-4 (SDC4).